The primary structure comprises 611 residues: Probable potassium transport system protein Kup (611 aa).

Transmembrane regions (helical) follow at residues 24–44, 55–75, 102–122, 143–163, 175–195, 218–238, 252–272, 275–295, 296–316, 344–364, 374–394, 400–420, and 423–443; these read LVFG…FLFL, VSLI…FLAM, VAVF…ECVI, LIAQ…LFLF, FGPV…ISVA, LLGF…EALF, AWGF…AYLL, TDVI…LYIP, FLLL…SGIF, IYIN…LLIF, YGLA…AIFL, LYMG…LSTV, and ITHG…IVII.

It belongs to the HAK/KUP transporter (TC 2.A.72) family.

Its subcellular location is the cell membrane. It carries out the reaction K(+)(in) + H(+)(in) = K(+)(out) + H(+)(out). Functionally, transport of potassium into the cell. Likely operates as a K(+):H(+) symporter. This Methanospirillum hungatei JF-1 (strain ATCC 27890 / DSM 864 / NBRC 100397 / JF-1) protein is Probable potassium transport system protein Kup.